Consider the following 72-residue polypeptide: Phaiodotoxin-2 (72 aa).

One can recognise an LCN-type CS-alpha/beta domain in the interval 1–72 (KFIRHKDESF…CFGALESKCA (72 aa)). 4 cysteine pairs are disulfide-bonded: Cys13–Cys38, Cys23–Cys50, Cys27–Cys52, and Cys63–Cys71.

It belongs to the long (4 C-C) scorpion toxin superfamily. Sodium channel inhibitor family. Expressed by the venom gland.

The protein localises to the secreted. In terms of biological role, sodium channel (Nav) specific neurotoxin. This is Phaiodotoxin-2 from Anuroctonus phaiodactylus (Mafia scorpion).